A 1051-amino-acid chain; its full sequence is Transcription intermediary factor 1-alpha (1051 aa).

The segment at 1 to 42 (MEVAVEKAAAAAAPAGGPAAAAPSGENEAESRQGPDSESGGE) is disordered. A Glycyl lysine isopeptide (Lys-Gly) (interchain with G-Cter in SUMO2) cross-link involves residue K7. Low complexity predominate over residues 8–23 (AAAAAAPAGGPAAAAP). The segment at 52–77 (CAVCHQNIQSRVPKLLPCLHSFCQRC) adopts an RING-type zinc-finger fold. The interval 94–115 (SAETPPPAPAPAPAPGSPAGGP) is disordered. T97 is subject to Phosphothreonine. A compositionally biased stretch (pro residues) spans 97–109 (TPPPAPAPAPAPG). Phosphoserine is present on S110. 2 consecutive B box-type zinc fingers follow at residues 158–211 (KSNQ…VSPE) and 218–259 (QRPV…YQFI). C163, C166, C187, and H200 together coordinate Zn(2+). K205 participates in a covalent cross-link: Glycyl lysine isopeptide (Lys-Gly) (interchain with G-Cter in SUMO2). Residues C223, H226, C246, and H251 each contribute to the Zn(2+) site. Residue K276 forms a Glycyl lysine isopeptide (Lys-Gly) (interchain with G-Cter in SUMO2) linkage. A coiled-coil region spans residues 289–359 (NQIQNRIIEI…AGLSKQLEHV (71 aa)). Residues 429–457 (ESQPQMPKQNPVVEQSSQPPGGLPSNQLS) form a disordered region. Residues 431–457 (QPQMPKQNPVVEQSSQPPGGLPSNQLS) are compositionally biased toward polar residues. Residues K436 and K458 each participate in a glycyl lysine isopeptide (Lys-Gly) (interchain with G-Cter in SUMO2) cross-link. R469 carries the post-translational modification Omega-N-methylarginine. 2 stretches are compositionally biased toward low complexity: residues 479–490 (AQRQQVQRRPAP) and 501–510 (PIQQPSISHQ). Residues 479-551 (AQRQQVQRRP…PSQNVPRQTT (73 aa)) are disordered. A compositionally biased stretch (pro residues) spans 526–535 (PNGPVLPPYP). Positions 538 to 551 (LRYSPSQNVPRQTT) are enriched in polar residues. Residues K553 and K642 each participate in a glycyl lysine isopeptide (Lys-Gly) (interchain with G-Cter in SUMO2) cross-link. Residues 644–713 (TGVDHAQPRP…PAGADSTHKV (70 aa)) are disordered. A phosphoserine mark is found at S655, S661, and S668. Polar residues predominate over residues 655 to 667 (SNRTVQSPNSSVP). Residues 686–708 (SPSASSVGSRGSSGSSSKPAGAD) are compositionally biased toward low complexity. Residues K703 and K712 each participate in a glycyl lysine isopeptide (Lys-Gly) (interchain with G-Cter in SUMO2) cross-link. Glycyl lysine isopeptide (Lys-Gly) (interchain with G-Cter in SUMO); alternate cross-links involve residues K724 and K742. Residue K724 forms a Glycyl lysine isopeptide (Lys-Gly) (interchain with G-Cter in SUMO1); alternate linkage. Residues K724 and K742 each participate in a glycyl lysine isopeptide (Lys-Gly) (interchain with G-Cter in SUMO2); alternate cross-link. A phosphoserine mark is found at S745 and S769. The tract at residues 755 to 780 (NYPRSILTSLLLNSSQSSASEETVLR) is nuclear receptor binding site (NRBS). The tract at residues 771-827 (SSASEETVLRSDAPDSTGDQPGLHQENSSNGKSEWSDASQKSPVHVGETRKEDDPNE) is disordered. Residues 795–812 (QENSSNGKSEWSDASQKS) are compositionally biased toward polar residues. A Glycyl lysine isopeptide (Lys-Gly) (interchain with G-Cter in SUMO2) cross-link involves residue K802. Position 809 is a phosphoserine (S809). K811 participates in a covalent cross-link: Glycyl lysine isopeptide (Lys-Gly) (interchain with G-Cter in SUMO2). At S812 the chain carries Phosphoserine. At T819 the chain carries Phosphothreonine. The PHD-type zinc-finger motif lies at 827–874 (EDWCAVCQNGGELLCCEKCPKVFHLTCHVPTLTNFPSGEWICTFCRDL). Residues 835-841 (NGGELLC) form an interaction with histone H3 that is not methylated at 'Lys-4' (H3K4me0) region. K876 participates in a covalent cross-link: Glycyl lysine isopeptide (Lys-Gly) (interchain with G-Cter in SUMO2). The Nuclear localization signal signature appears at 892–908 (KRKSEGLTKLTPIDKRK). The region spanning 900–1005 (KLTPIDKRKC…SYFEELLKNL (106 aa)) is the Bromo domain. Residues K950 and K993 each participate in a glycyl lysine isopeptide (Lys-Gly) (interchain with G-Cter in SUMO2) cross-link. Positions 1024-1051 (KFSDDSDDDFVQPRKKRLKSTEDRQLLK) are disordered. A phosphoserine mark is found at S1026 and S1029. K1042 participates in a covalent cross-link: Glycyl lysine isopeptide (Lys-Gly) (interchain with G-Cter in SUMO2). Residues 1042–1051 (KSTEDRQLLK) show a composition bias toward basic and acidic residues. Position 1043 is a phosphoserine (S1043).

In terms of assembly, interacts (via bromo domain) with histone H3 (via N-terminus), provided that it is not methylated at 'Lys-4' (H3K4me0). Does not interact with histone H3 that is methylated at 'Lys-4' (H3K4me1, H3K4me2 or H3K4me3). Interacts (via bromo domain) with histone H3 (via N-terminus) that is acetylated at 'Lys-23' (H3K23ac). Has the highest affinity for histone H3 that is both unmodified at 'Lys-4' (H3K4me0) and acetylated at 'Lys-23' (H3K23ac). Has very low affinity for histone H3 that is methylated at 'Lys-9' (H3K9me), or acetylated at both 'Lys-9' (H3K9ac) and 'Lys-14' (H3K14ac), or acetylated at 'Lys-27' (H3K27ac) (in vitro). Interacts with TRIM16. Interacts with NR3C2/MCR. Interacts with the ligand-binding domain of estrogen receptors (in vitro). Interaction with DNA-bound estrogen receptors requires the presence of estradiol. Interacts with AR, CARM1, KAT5/TIP60, NCOA2/GRIP1, BRD7, CBX1, CBX3 and CBX5. Part of a coactivator complex containing TRIM24, NCOA2/GRIP1 and CARM1. Interacts with p53/TP53 and PML. Post-translationally, sumoylated. Phosphorylated at Ser-768 by ATM kinase induces ubiquitination and degradation during DNA damage. In terms of processing, undergoes ubiquitination-mediated degradation in response to DNA damage. As to expression, detected in embryonic and adult liver. Detected in zygote and throughout embryogenesis (at protein level). Detected in all adult tissues, with the highest expression level in testis.

The protein localises to the nucleus. It localises to the cytoplasm. The catalysed reaction is S-ubiquitinyl-[E2 ubiquitin-conjugating enzyme]-L-cysteine + [acceptor protein]-L-lysine = [E2 ubiquitin-conjugating enzyme]-L-cysteine + N(6)-ubiquitinyl-[acceptor protein]-L-lysine.. It functions in the pathway protein modification; protein ubiquitination. Its function is as follows. Transcriptional coactivator that interacts with numerous nuclear receptors and coactivators and modulates the transcription of target genes. Interacts with chromatin depending on histone H3 modifications, having the highest affinity for histone H3 that is both unmodified at 'Lys-4' (H3K4me0) and acetylated at 'Lys-23' (H3K23ac). Has E3 protein-ubiquitin ligase activity. Promotes ubiquitination and proteasomal degradation of p53/TP53. Plays a role in the regulation of cell proliferation and apoptosis via its effects on p53/TP53 levels. Up-regulates ligand-dependent transcription activation by AR, GCR/NR3C1, thyroid hormone receptor (TR) and ESR1. Modulates transcription activation by retinoic acid (RA) receptors, such as RARA. Plays a role in regulating retinoic acid-dependent proliferation of hepatocytes. Required for normal transition from proliferating neonatal hepatocytes to quiescent adult hepatocytes. Functionally, transcriptional coactivator that interacts with numerous nuclear receptors and coactivators and modulates the transcription of target genes. Interacts with chromatin depending on histone H3 modifications, having the highest affinity for histone H3 that is both unmodified at 'Lys-4' (H3K4me0) and acetylated at 'Lys-23' (H3K23ac). Has E3 protein-ubiquitin ligase activity. During the DNA damage response, participates in an autoregulatory feedback loop with TP53. Early in response to DNA damage, ATM kinase phosphorylates TRIM24 leading to its ubiquitination and degradation. After sufficient DNA repair has occurred, TP53 activates TRIM24 transcription, ultimately leading to TRIM24-mediated TP53 ubiquitination and degradation. Plays a role in the regulation of cell proliferation and apoptosis, at least in part via its effects on p53/TP53 levels. Up-regulates ligand-dependent transcription activation by AR, GCR/NR3C1, thyroid hormone receptor (TR) and ESR1. Modulates transcription activation by retinoic acid (RA) receptors, including RARA. Plays a role in regulating retinoic acid-dependent proliferation of hepatocytes. Also participates in innate immunity by mediating the specific 'Lys-63'-linked ubiquitination of TRAF3 leading to activation of downstream signal transduction of the type I IFN pathway. Additionally, negatively regulates NLRP3/CASP1/IL-1beta-mediated pyroptosis and cell migration probably by ubiquitinating NLRP3. This is Transcription intermediary factor 1-alpha (Trim24) from Mus musculus (Mouse).